The chain runs to 159 residues: uncharacterized protein (159 aa).

This sequence to M.jannaschii MJECL20.

This is an uncharacterized protein from Methanocaldococcus jannaschii (strain ATCC 43067 / DSM 2661 / JAL-1 / JCM 10045 / NBRC 100440) (Methanococcus jannaschii).